The primary structure comprises 214 residues: Ribosomal RNA large subunit methyltransferase E (214 aa).

The S-adenosyl-L-methionine site is built by G60, W62, D86, D102, and D127. K167 functions as the Proton acceptor in the catalytic mechanism.

This sequence belongs to the class I-like SAM-binding methyltransferase superfamily. RNA methyltransferase RlmE family.

The protein resides in the cytoplasm. The catalysed reaction is uridine(2552) in 23S rRNA + S-adenosyl-L-methionine = 2'-O-methyluridine(2552) in 23S rRNA + S-adenosyl-L-homocysteine + H(+). Specifically methylates the uridine in position 2552 of 23S rRNA at the 2'-O position of the ribose in the fully assembled 50S ribosomal subunit. The sequence is that of Ribosomal RNA large subunit methyltransferase E from Janthinobacterium sp. (strain Marseille) (Minibacterium massiliensis).